Here is a 71-residue protein sequence, read N- to C-terminus: Serine palmitoyltransferase small subunit A (71 aa).

The Cytoplasmic portion of the chain corresponds to 1–12 (MAGMALARAWKQ). Residues 13-29 (MSWFYYQYLLVTALYML) form a helical membrane-spanning segment. Residues 30–34 (EPWER) lie on the Lumenal side of the membrane. The helical transmembrane segment at 35–57 (TVFNSMLVSIVGMALYTGYVFMP) threads the bilayer. Topologically, residues 58–71 (QHIMAILHYFEIVQ) are cytoplasmic.

The protein belongs to the SPTSS family. SPTSSA subfamily. Component of the serine palmitoyltransferase (SPT) complex, which is composed of SPTLC1, SPTLC2 or SPTLC3 and SPTSSA or SPTSSB. The heterodimer consisting of SPTLC1 and SPTLC2/SPTLC3 forms the catalytic core of the enzyme, while SPTSSA or SPTSSB subunits determine substrate specificity. SPT also interacts with ORMDL proteins, especially ORMDL3, which negatively regulate SPT activity in the presence of ceramides. Interacts with MBOAT7; the interaction plays a role in MBOAT7 localization to mitochondria-associated membranes.

The protein localises to the endoplasmic reticulum membrane. It functions in the pathway lipid metabolism; sphingolipid metabolism. In terms of biological role, component of the serine palmitoyltransferase multisubunit enzyme (SPT) that catalyzes the initial and rate-limiting step in sphingolipid biosynthesis by condensing L-serine and activated acyl-CoA (most commonly palmitoyl-CoA) to form long-chain bases. The SPT complex is composed of SPTLC1, SPTLC2 or SPTLC3 and SPTSSA or SPTSSB. Within this complex, the heterodimer consisting of SPTLC1 and SPTLC2/SPTLC3 forms the catalytic core. Within the SPT complex, SPTSSA stimulates the catalytic activity and plays a role in substrate specificity, which depends upon the overall complex composition. The SPTLC1-SPTLC2-SPTSSA complex shows a strong preference for C16-CoA substrate, while the SPTLC1-SPTLC3-SPTSSA isozyme uses both C14-CoA and C16-CoA as substrates, with a slight preference for C14-CoA. Independently of its action as a SPT component, may be involved in MBOAT7 localization to mitochondria-associated membranes, a membrane bridge between the endoplasmic reticulum and mitochondria, may hence affect MBOAT7-catalyzed incorporation of arachidonic acid into phosphatidylinositol. The protein is Serine palmitoyltransferase small subunit A of Homo sapiens (Human).